The primary structure comprises 280 residues: Ribosomal RNA small subunit methyltransferase A (280 aa).

S-adenosyl-L-methionine contacts are provided by N30, V32, G57, E78, D108, and N125.

This sequence belongs to the class I-like SAM-binding methyltransferase superfamily. rRNA adenine N(6)-methyltransferase family. RsmA subfamily.

It is found in the cytoplasm. The catalysed reaction is adenosine(1518)/adenosine(1519) in 16S rRNA + 4 S-adenosyl-L-methionine = N(6)-dimethyladenosine(1518)/N(6)-dimethyladenosine(1519) in 16S rRNA + 4 S-adenosyl-L-homocysteine + 4 H(+). Functionally, specifically dimethylates two adjacent adenosines (A1518 and A1519) in the loop of a conserved hairpin near the 3'-end of 16S rRNA in the 30S particle. May play a critical role in biogenesis of 30S subunits. The sequence is that of Ribosomal RNA small subunit methyltransferase A from Leifsonia xyli subsp. xyli (strain CTCB07).